Here is a 367-residue protein sequence, read N- to C-terminus: MHNYNIFLSFYNYISSGVLLFLKIIIVIISVMVSVAYLVYMERKVIAAIQLRQGPSVVGPFGLLQPFADAIKLIIKEPIIPFKANKLCFLIAPVITFTLALLGWAVIPFGSYIIVDNGQELIVPNVIANINIGVLYILAISSLGVYGIIIAGWSSNSNYAFLGAIRSASQMISYEVSIGLTIVTVLLATGSLKLGEIVIARHNMPYWIDLLLLPMAFMFFISALAETNRHPFDLPEAESELVSGYNVEYSSMPFALFFLGEYANMILMSAMAVIFFFGGWYPPLNVSFLYIIPGTIWFIFKIVILLFCFIWIRASIPRYRYDQLMRLGWKVFLPISLFWVILVSGILVYTDSLPKNTLNNTVYYKEN.

Transmembrane regions (helical) follow at residues 18–38, 87–107, 132–152, 180–200, 204–224, 257–277, 291–311, and 328–348; these read VLLF…VAYL, LCFL…WAVI, IGVL…IIAG, LTIV…IVIA, MPYW…ISAL, FFLG…IFFF, IIPG…CFIW, and GWKV…GILV.

It belongs to the complex I subunit 1 family. In terms of assembly, NDH-1 is composed of 14 different subunits. Subunits NuoA, H, J, K, L, M, N constitute the membrane sector of the complex.

The protein localises to the cell inner membrane. It carries out the reaction a quinone + NADH + 5 H(+)(in) = a quinol + NAD(+) + 4 H(+)(out). NDH-1 shuttles electrons from NADH, via FMN and iron-sulfur (Fe-S) centers, to quinones in the respiratory chain. The immediate electron acceptor for the enzyme in this species is believed to be ubiquinone. Couples the redox reaction to proton translocation (for every two electrons transferred, four hydrogen ions are translocated across the cytoplasmic membrane), and thus conserves the redox energy in a proton gradient. This subunit may bind ubiquinone. The chain is NADH-quinone oxidoreductase subunit H from Ehrlichia ruminantium (strain Gardel).